A 157-amino-acid polypeptide reads, in one-letter code: Probable calcium-binding protein CML23 (157 aa).

4 EF-hand domains span residues 11-46 (GSMEDIKKVFQRFDKNNDGKISIDELKDVIGALSPN), 47-82 (ASQEETKAMMKEFDLDGNGFIDLDEFVALFQISDQS), 86-121 (SAIRDLKEAFDLYDLDRNGRISANELHSVMKNLGEK), and 122-157 (CSIQDCQRMINKVDSDGDGCVDFEEFKKMMMINGSA). 19 residues coordinate Ca(2+): D24, N26, D28, K30, E35, D60, D62, N64, E71, D99, D101, N103, R105, E110, D135, D137, D139, C141, and E146.

Potential calcium sensor. The protein is Probable calcium-binding protein CML23 (CML23) of Arabidopsis thaliana (Mouse-ear cress).